Reading from the N-terminus, the 500-residue chain is Aldehyde dehydrogenase, mitochondrial (500 aa).

N6-acetyllysine is present on residues lysine 35, lysine 56, and lysine 142. NAD(+) is bound at residue 245 to 250; it reads GSTEVG. Glutamate 268 acts as the Proton acceptor in catalysis. Cysteine 302 acts as the Nucleophile in catalysis. Residues lysine 358, lysine 366, lysine 409, lysine 411, lysine 424, and lysine 434 each carry the N6-acetyllysine modification.

This sequence belongs to the aldehyde dehydrogenase family. In terms of assembly, homotetramer. Post-translationally, in response to mitochondrial stress, the precursor protein is ubiquitinated by the SIFI complex in the cytoplasm before mitochondrial import, leading to its degradation. Within the SIFI complex, UBR4 initiates ubiquitin chain that are further elongated or branched by KCMF1.

It is found in the mitochondrion matrix. The enzyme catalyses an aldehyde + NAD(+) + H2O = a carboxylate + NADH + 2 H(+). It participates in alcohol metabolism; ethanol degradation; acetate from ethanol: step 2/2. Functionally, required for clearance of cellular formaldehyde, a cytotoxic and carcinogenic metabolite that induces DNA damage. This chain is Aldehyde dehydrogenase, mitochondrial (ALDH2), found in Equus caballus (Horse).